The chain runs to 278 residues: Large ribosomal subunit protein uL2 (278 aa).

The disordered stretch occupies residues 201–278 (HGNINDGKAG…IMRSRHQRKK (78 aa)). Basic residues predominate over residues 210-221 (GRSRWRGKRPHV).

This sequence belongs to the universal ribosomal protein uL2 family. As to quaternary structure, part of the 50S ribosomal subunit. Forms a bridge to the 30S subunit in the 70S ribosome.

Its function is as follows. One of the primary rRNA binding proteins. Required for association of the 30S and 50S subunits to form the 70S ribosome, for tRNA binding and peptide bond formation. It has been suggested to have peptidyltransferase activity; this is somewhat controversial. Makes several contacts with the 16S rRNA in the 70S ribosome. This Rhizobium meliloti (strain 1021) (Ensifer meliloti) protein is Large ribosomal subunit protein uL2.